Here is a 433-residue protein sequence, read N- to C-terminus: MSHEGQEELLDYSDSEEIAVPTTTEVAGADSATDKEADKKGSYVGIHATGFRDFLLKPELLRAIGDCGFEHPSEVQQVCIPQSILGTDVLCQAKSGLGKTAVFVLSTLQQLDPVPGEISTLVICHTRELAYQIRNEYARFSKYMPDVKTEVFYGGTPIKRDIEKLKSKDTCPHIVVATPGRLHALVNEKAIRLSNVKSFVIDECDKVLESIDMRRDVQDIFRATPHQKQVMMFSATLSQEIRPVCKKFMQNPLEIYVDDEAKLTLHGLQQYYIKLEEKEKNRKLSDLLDSLEFNQVIIFVKSTQRANELNKLLCSCNFPSIAVHSGLPQEERIERYRSFKEFNKRICVSTDVFGRGIDIERINLAINYDLPNEADQYLHRVGRAGRFGTKGLAISLVGSKEDEEVLEKIQSRFDVKITEFPEEGVDPSTYMNT.

Positions Thr-49–Gln-77 match the Q motif motif. The region spanning Ile-80 to Ile-255 is the Helicase ATP-binding domain. Ala-93–Thr-100 serves as a coordination point for ATP. The DEAD box signature appears at Asp-202–Asp-205. Positions Gly-267–Ser-428 constitute a Helicase C-terminal domain.

Belongs to the DEAD box helicase family. DECD subfamily.

Its subcellular location is the nucleus. It catalyses the reaction ATP + H2O = ADP + phosphate + H(+). ATP-binding RNA helicase involved in transcription elongation and required for the export of mRNA out of the nucleus. SUB2 also plays a role in pre-mRNA splicing and spliceosome assembly. May be involved in rDNA and telomeric silencing, and maintenance of genome integrity. This Scheffersomyces stipitis (strain ATCC 58785 / CBS 6054 / NBRC 10063 / NRRL Y-11545) (Yeast) protein is ATP-dependent RNA helicase SUB2 (SUB2).